The primary structure comprises 1332 residues: DNA-directed RNA polymerase subunit beta' (1332 aa).

Zn(2+) contacts are provided by Cys60, Cys62, Cys75, and Cys78. The Mg(2+) site is built by Asp535, Asp537, and Asp539. Cys894, Cys977, Cys984, and Cys987 together coordinate Zn(2+).

This sequence belongs to the RNA polymerase beta' chain family. The RNAP catalytic core consists of 2 alpha, 1 beta, 1 beta' and 1 omega subunit. When a sigma factor is associated with the core the holoenzyme is formed, which can initiate transcription. Mg(2+) serves as cofactor. It depends on Zn(2+) as a cofactor.

The catalysed reaction is RNA(n) + a ribonucleoside 5'-triphosphate = RNA(n+1) + diphosphate. In terms of biological role, DNA-dependent RNA polymerase catalyzes the transcription of DNA into RNA using the four ribonucleoside triphosphates as substrates. This chain is DNA-directed RNA polymerase subunit beta', found in Corynebacterium kroppenstedtii (strain DSM 44385 / JCM 11950 / CIP 105744 / CCUG 35717).